Consider the following 906-residue polypeptide: Ribonucleoside-diphosphate reductase large subunit-like protein (906 aa).

Disordered regions lie at residues 1-70 (MNPA…AGNT) and 89-129 (VSWR…LSTF). The span at 98-109 (PDGTPSVLSLTR) shows a compositional bias: polar residues.

This sequence belongs to the ribonucleoside diphosphate reductase large chain family.

It is found in the virion. It localises to the host cytoplasm. Functionally, does not possess a ribonucleotide reductase activity. Betaherpesviruses probably use another strategy to expand the dNTP pool in a quiescent host cell. The chain is Ribonucleoside-diphosphate reductase large subunit-like protein from Human cytomegalovirus (strain AD169) (HHV-5).